The sequence spans 244 residues: Aliphatic sulfonates import ATP-binding protein SsuB 2 (244 aa).

An ABC transporter domain is found at 13-229 (VQVRSLVRGF…ALGDSKFHEF (217 aa)). Position 45 to 52 (45 to 52 (GKSGSGKS)) interacts with ATP.

Belongs to the ABC transporter superfamily. Aliphatic sulfonates importer (TC 3.A.1.17.2) family. The complex is composed of two ATP-binding proteins (SsuB), two transmembrane proteins (SsuC) and a solute-binding protein (SsuA).

It localises to the cell membrane. It carries out the reaction ATP + H2O + aliphatic sulfonate-[sulfonate-binding protein]Side 1 = ADP + phosphate + aliphatic sulfonateSide 2 + [sulfonate-binding protein]Side 1.. Functionally, part of the ABC transporter complex SsuABC involved in aliphatic sulfonates import. Responsible for energy coupling to the transport system. This is Aliphatic sulfonates import ATP-binding protein SsuB 2 from Rhodococcus jostii (strain RHA1).